A 764-amino-acid polypeptide reads, in one-letter code: Irregular chiasm C-roughest protein (764 aa).

An N-terminal signal peptide occupies residues 1-19; sequence MLHTMQLLLLATIVGMVRS. Residues 20–533 are Extracellular-facing; the sequence is SPYTSYQNQR…QAKKSVSLLM (514 aa). Ig-like C2-type domains lie at 21-120, 132-230, 237-343, 346-419, and 430-530; these read PYTS…PAIR, PEAP…AKIR, PKVK…LDIS, PSFR…AEIS, and PAIG…KSVS. 5 disulfides stabilise this stretch: Cys-49/Cys-107, Cys-155/Cys-214, Cys-281/Cys-325, Cys-367/Cys-408, and Cys-450/Cys-508. Asn-211, Asn-313, Asn-393, Asn-400, and Asn-507 each carry an N-linked (GlcNAc...) asparagine glycan. The helical transmembrane segment at 534 to 556 threads the bilayer; that stretch reads TIVGGISVVAFLLVLTILVVVYI. The Cytoplasmic portion of the chain corresponds to 557–764; sequence KCKKRTKLPP…SSLLPPPTAV (208 aa). Disordered regions lie at residues 640 to 660 and 691 to 719; these read HQNQ…HHTQ and NGLP…STTA. Residues 692–701 are compositionally biased toward polar residues; sequence GLPSLQSTTA. Residues 702 to 719 show a composition bias toward low complexity; sequence SVVSSSPNGSCSNQSTTA.

As to expression, postembryonic expression is strong in the developing optic lobe and in the eye imaginal disk.

It is found in the membrane. Functionally, required for correct axonal pathway formation in the optic lobe and for programmed cell death in the developing retina. In Drosophila melanogaster (Fruit fly), this protein is Irregular chiasm C-roughest protein (rst).